A 317-amino-acid chain; its full sequence is RHOMBOID-like protein 2 (317 aa).

7 helical membrane-spanning segments follow: residues 33–53 (SWLI…VMFV), 118–138 (WLHA…FIGI), 149–169 (VGLI…LFLQ), 172–192 (ISVG…SELL), 202–222 (AAAL…GMLP), 224–244 (VDNF…FVLL), and 272–292 (LFVV…VMLF). Ser-177 (nucleophile) is an active-site residue. His-229 serves as the catalytic Charge relay system.

The protein belongs to the peptidase S54 family. Expressed in roots, seedlings, leaves, stems and flowers.

The protein resides in the golgi apparatus membrane. It catalyses the reaction Cleaves type-1 transmembrane domains using a catalytic dyad composed of serine and histidine that are contributed by different transmembrane domains.. In terms of biological role, rhomboid-type serine protease that catalyzes intramembrane proteolysis. Can cleave the Drosophila proteins Spitz and Keren. May function in pollen elongation. The protein is RHOMBOID-like protein 2 of Arabidopsis thaliana (Mouse-ear cress).